The following is a 464-amino-acid chain: Glycosyl hydrolase family 109 protein 1 (464 aa).

The signal sequence occupies residues M1–A16. C17 is lipidated: N-palmitoyl cysteine. C17 carries S-diacylglycerol cysteine lipidation. NAD(+) is bound by residues M63 to R64, D85, W134 to H137, E154 to V155, and N183. Substrate is bound by residues Y212, R228, Y240–H243, and Y318. Residue Y240 participates in NAD(+) binding.

It belongs to the Gfo/Idh/MocA family. Glycosyl hydrolase 109 subfamily. The cofactor is NAD(+).

The protein resides in the cell membrane. Its function is as follows. Glycosidase. Has no alpha-N-acetylgalactosaminidase activity. The polypeptide is Glycosyl hydrolase family 109 protein 1 (Bacteroides fragilis (strain ATCC 25285 / DSM 2151 / CCUG 4856 / JCM 11019 / LMG 10263 / NCTC 9343 / Onslow / VPI 2553 / EN-2)).